The sequence spans 297 residues: 4-diphosphocytidyl-2-C-methyl-D-erythritol kinase (297 aa).

Lys14 is an active-site residue. 99–109 (PVAAGIGGGSA) contacts ATP. Residue Asp141 is part of the active site.

The protein belongs to the GHMP kinase family. IspE subfamily.

It carries out the reaction 4-CDP-2-C-methyl-D-erythritol + ATP = 4-CDP-2-C-methyl-D-erythritol 2-phosphate + ADP + H(+). It participates in isoprenoid biosynthesis; isopentenyl diphosphate biosynthesis via DXP pathway; isopentenyl diphosphate from 1-deoxy-D-xylulose 5-phosphate: step 3/6. Functionally, catalyzes the phosphorylation of the position 2 hydroxy group of 4-diphosphocytidyl-2C-methyl-D-erythritol. This is 4-diphosphocytidyl-2-C-methyl-D-erythritol kinase from Bradyrhizobium diazoefficiens (strain JCM 10833 / BCRC 13528 / IAM 13628 / NBRC 14792 / USDA 110).